Here is a 218-residue protein sequence, read N- to C-terminus: Protein-L-isoaspartate O-methyltransferase (218 aa).

S52 is an active-site residue.

It belongs to the methyltransferase superfamily. L-isoaspartyl/D-aspartyl protein methyltransferase family.

The protein resides in the cytoplasm. It carries out the reaction [protein]-L-isoaspartate + S-adenosyl-L-methionine = [protein]-L-isoaspartate alpha-methyl ester + S-adenosyl-L-homocysteine. In terms of biological role, catalyzes the methyl esterification of L-isoaspartyl residues in peptides and proteins that result from spontaneous decomposition of normal L-aspartyl and L-asparaginyl residues. It plays a role in the repair and/or degradation of damaged proteins. This Rhodopseudomonas palustris (strain ATCC BAA-98 / CGA009) protein is Protein-L-isoaspartate O-methyltransferase.